The following is a 149-amino-acid chain: Transcriptional regulator MraZ (149 aa).

SpoVT-AbrB domains lie at 7-54 (KYVN…GISH) and 83-126 (AVQL…QPQN).

This sequence belongs to the MraZ family. As to quaternary structure, forms oligomers.

The protein resides in the cytoplasm. It localises to the nucleoid. The sequence is that of Transcriptional regulator MraZ from Rickettsia rickettsii (strain Sheila Smith).